The sequence spans 75 residues: UPF0352 protein YPTB1297 (75 aa).

Belongs to the UPF0352 family.

This chain is UPF0352 protein YPTB1297, found in Yersinia pseudotuberculosis serotype I (strain IP32953).